Here is a 59-residue protein sequence, read N- to C-terminus: Large ribosomal subunit protein bL32 (59 aa).

Positions 1–59 (MAVQQNKKSPSKRGMHRSHDFLTTSPLAVEPSTGEVHLRHHISPNGYYRGKKVVKTKND) are disordered. Residues 49-59 (RGKKVVKTKND) are compositionally biased toward basic residues.

Belongs to the bacterial ribosomal protein bL32 family.

The polypeptide is Large ribosomal subunit protein bL32 (Burkholderia mallei (strain NCTC 10247)).